The following is a 593-amino-acid chain: MFFYSPNVASSSSASHRRGTLTHQHHLHVGHLDTRLSVQIPEILSRNFGHHDPERARLVPEHLRFLVDENQELWTGGNQPPVGILELCAASPVDSVFSTNDARRHSQRKLILRRPTISIQEDGKIIIDHVTARWEGANINSQSALLDADDGATVITDTIKDDQEDKEPKSCPQQTVKYIKILLPHVILVSVLIGYLCLGAWILMLLETRTELLSRSKKLVRLTNLMSNFTAESWRMLSDAQHGSITMDEGEWAATFREWMVRVSETVDDRRPIRRELNRPDDLSNMHNKWTFPTALLYVLTVLTTCGYGEVSVDTDVGKVFSVAFALVGIPLMFITAADIGKFLSETLLKFVSFWNRSVRKVKQWMSRVRHGRRKSLQSTGGQNDTLDILGVDGTEEKLWFPIGAYVSCICLYCSMGSAMFINWERTWSFIHAFHFGFNLIVTVGLGDIVVTDYIFLSLIVAFVIVGLSVVTMCVDLASTHLKAYFTRIHYFGRAKRFLGMSEELKEIVALLGAMRRKKGGKVTWNDVRDFLDNELRDRPFEPHELLMKLRFIDETSSGMSTIRHNSFQSDFFRESEYIRRVAALRPEQPAYL.

The next 6 membrane-spanning stretches (helical) occupy residues 186 to 206 (VILV…LMLL), 291 to 311 (TFPT…YGEV), 320 to 340 (VFSV…AADI), 402 to 422 (PIGA…AMFI), 430 to 450 (FIHA…GDIV), and 455 to 475 (IFLS…TMCV).

The protein belongs to the two pore domain potassium channel (TC 1.A.1.8) family.

It localises to the membrane. Its function is as follows. Has a role in mobility, possibly in the transport of potassium in muscles. The chain is Uncoordinated protein 58 from Caenorhabditis briggsae.